We begin with the raw amino-acid sequence, 320 residues long: Methyltransferase gedG (320 aa).

Residues 61-154 are methyltransferase domain; it reads DAGAGNGVYS…QLRPGGTFAC (94 aa). Residues 231–252 are disordered; it reads GLLPPERRGEVTEPDHEGPHDQ. Basic and acidic residues predominate over residues 235-252; it reads PERRGEVTEPDHEGPHDQ.

This sequence belongs to the methyltransferase superfamily.

It functions in the pathway secondary metabolite biosynthesis. Functionally, methyltransferase; part of the gene cluster that mediates the biosynthesis of geodin, an intermediate in the biosynthesis of other natural products. The pathway begins with the synthesis of atrochrysone thioester by the polyketide synthase (PKS) gedC. The atrochrysone carboxyl ACP thioesterase gedB then breaks the thioester bond and releases the atrochrysone carboxylic acid from gedC. The atrochrysone carboxylic acid is then converted to atrochrysone which is further transformed into emodinanthrone. The next step is performed by the emodinanthrone oxygenase gedH that catalyzes the oxidation of emodinanthrone to emodin. Emodin O-methyltransferase encoded probably by gedA then catalyzes methylation of the 8-hydroxy group of emodin to form questin. Ring cleavage of questin by questin oxidase gedK leads to desmethylsulochrin via several intermediates including questin epoxide. Another methylation step probably catalyzed by methyltransferase gedG leads to the formation of sulochrin which is further converted to dihydrogeodin by the sulochrin halogenase gedL. Finally, the dihydrogeodin oxidase gedJ catalyzes the stereospecific phenol oxidative coupling reaction converting dihydrogeodin to geodin. The protein is Methyltransferase gedG of Aspergillus terreus (strain NIH 2624 / FGSC A1156).